A 446-amino-acid chain; its full sequence is MTFSNRVSVAIIGGGIGGLSLAIGLLQNKNLDVAIYETAPKFAEIGAGVALGPNAQHALALISPAAEHAFRIHATTSLSPEFEHVWFDFRNGNAGEKDGEVLSKVENETGQQTVHRAKFLDELVKLIPREIAHFGKRLIHIQKDPVSGGAQYKLFFEDGTTASADCVIGADGIHSSVRKHLLGESHPAATPVFTGTVVYRGLIPMDVARDAIGEFADNSYMWCGDGGMVMTYPIDHGETLNVVGTRNDKGRWDGPPYTRPVDEETVRNDFMGWGEIPSKVIQLLKQPTMWAILDHYPAPYYYSGNVAIMGDAAHATTPFQGAGAGQAIEDALVLSTLFQRVTHSGLVRPALAAYNNVRLRRTQKVVATSRDALRLFCFNDRYVDGDAQRWREVWNGRMDWLWGMDLEKQNRDAVNLFADIVEKQSSARETMPKFGPVPFPVATSTV.

The chain crosses the membrane as a helical span at residues 7 to 27; it reads VSVAIIGGGIGGLSLAIGLLQ. FAD contacts are provided by E37 and A50. An N-linked (GlcNAc...) asparagine glycan is attached at N107. R116 contacts FAD. Residue R200 is part of the active site. Residues D311 and A324 each contribute to the FAD site.

It belongs to the paxM FAD-dependent monooxygenase family. It depends on FAD as a cofactor.

The protein resides in the membrane. The enzyme catalyses 6-methylsalicylate + AH2 + O2 + H(+) = 3-methylcatechol + A + CO2 + H2O. It participates in secondary metabolite biosynthesis. 6-methylsalicylate 1-monooxygenase; part of the gene cluster that mediates the biosynthesis of terreic acid, a quinone epoxide inhibitor of Bruton's tyrosine kinase. The first step of the pathway is the synthesis of 6-methylsalicylic acid (6-MSA) by the 6-methylsalicylic acid synthase atX. In the biosynthesis of 6-MSA, atX utilizes one acetyl-CoA and three malonyl-CoAs as its substrates and catalyzes a series of programmed reactions including Claisen condensation, reduction, aldol cyclization, and the hydrolytic cleavage that yields 6-MSA. The 6-methylsalicylate 1-monooxygenase atA then catalyzes the decarboxylative hydroxylation of 6-MSA to 3-methylcatechol. The next step is the conversion of 3-methylcatechol to 3-methyl-1,2,4-benzenetriol by cytochrome P450 monooxygenase atE, which is enhanced by cytochrome P450 monooxygenase atG. Then, the epoxidase atD catalyzes the epoxidation and hydroxyl oxidation of 3-methyl-1,2,4-benzenetriol to terremutin. Lastly, GMC oxidoreductase atC oxidizes terremutin to terreic acid. This Aspergillus terreus (strain NIH 2624 / FGSC A1156) protein is 6-methylsalicylate 1-monooxygenase atA.